Reading from the N-terminus, the 240-residue chain is Glyceraldehyde 3-phosphate phosphatase (240 aa).

Belongs to the HAD-like hydrolase superfamily. Requires Mg(2+) as cofactor.

In terms of biological role, catalyzes the dephosphorylation of D,L-glyceraldehyde 3-phosphate in vitro. This chain is Glyceraldehyde 3-phosphate phosphatase, found in Pyrococcus furiosus (strain ATCC 43587 / DSM 3638 / JCM 8422 / Vc1).